Here is a 746-residue protein sequence, read N- to C-terminus: Exostosin-1 (746 aa).

Residues 1–7 (MQAKKRY) lie on the Cytoplasmic side of the membrane. The helical; Signal-anchor for type II membrane protein transmembrane segment at 8-28 (FILLSAGSCLALLFYFGGLQF) threads the bilayer. The Lumenal segment spans residues 29–746 (RASRSHSRRE…RKKYRDIERL (718 aa)). The N-linked (GlcNAc...) asparagine glycan is linked to Asn-89. 2 cysteine pairs are disulfide-bonded: Cys-98-Cys-103 and Cys-109-Cys-152. Positions 166 and 203 each coordinate a protein. Lys-267, Lys-269, Tyr-271, and Arg-280 together coordinate UDP. Cys-298 and Cys-312 are disulfide-bonded. Position 300 (His-300) interacts with a protein. Residues Tyr-319 and Tyr-324 each coordinate UDP. Asn-330 carries N-linked (GlcNAc...) asparagine glycosylation. 2 cysteine pairs are disulfide-bonded: Cys-334–Cys-355 and Cys-652–Cys-704. UDP is bound by residues Arg-346 and Glu-349.

This sequence belongs to the glycosyltransferase 47 family. As to quaternary structure, part of the heparan sulfate polymerase, a dimeric complex composed of EXT1 and EXT2. Could also form homooligomeric complexes. Interacts with NDST1. Post-translationally, N-glycosylated.

The protein localises to the golgi apparatus membrane. It is found in the golgi apparatus. Its subcellular location is the cis-Golgi network membrane. It localises to the endoplasmic reticulum membrane. The catalysed reaction is 3-O-{alpha-D-GlcNAc-[(1-&gt;4)-beta-D-GlcA-(1-&gt;4)-alpha-D-GlcNAc](n)-(1-&gt;4)-beta-D-GlcA-(1-&gt;3)-beta-D-Gal-(1-&gt;3)-beta-D-Gal-(1-&gt;4)-beta-D-Xyl}-L-seryl-[protein] + UDP-alpha-D-glucuronate = 3-O-{[(1-&gt;4)-beta-D-GlcA-(1-&gt;4)-alpha-D-GlcNAc](n+1)-(1-&gt;4)-beta-D-GlcA-(1-&gt;3)-beta-D-Gal-(1-&gt;3)-beta-D-Gal-(1-&gt;4)-beta-D-Xyl}-L-seryl-[protein] + UDP + H(+). It functions in the pathway protein modification; protein glycosylation. Its function is as follows. Glycosyltransferase forming with EXT2 the heterodimeric heparan sulfate polymerase which catalyzes the elongation of the heparan sulfate glycan backbone. Glycan backbone extension consists in the alternating transfer of (1-&gt;4)-beta-D-GlcA and (1-&gt;4)-alpha-D-GlcNAc residues from their respective UDP-sugar donors. Both EXT1 and EXT2 are required for the full activity of the polymerase since EXT1 bears the N-acetylglucosaminyl-proteoglycan 4-beta-glucuronosyltransferase activity within the complex while EXT2 carries the glucuronosyl-N-acetylglucosaminyl-proteoglycan 4-alpha-N-acetylglucosaminyltransferase activity. Heparan sulfate proteoglycans are ubiquitous components of the extracellular matrix and play an important role in tissue homeostasis and signaling. The sequence is that of Exostosin-1 (EXT1) from Bos taurus (Bovine).